A 372-amino-acid polypeptide reads, in one-letter code: Fatty acid 2-hydroxylase (372 aa).

Positions 8-86 (AASFSPSEVQ…LEQYYVGELR (79 aa)) constitute a Cytochrome b5 heme-binding domain. Heme is bound by residues histidine 43 and histidine 69. 2 helical membrane passes run 168 to 188 (VWYS…WSYY) and 213 to 233 (SMFP…EYLI). The Fatty acid hydroxylase domain maps to 219-361 (FMLGTFLWSL…TKLWDYCFHT (143 aa)). Zn(2+)-binding residues include histidine 234, histidine 239, histidine 257, histidine 260, and histidine 261. The next 2 helical transmembrane spans lie at 268 to 288 (SRLV…YLCM) and 290 to 310 (LILP…GYVL). Positions 315, 319, 336, 339, and 340 each coordinate Zn(2+).

Belongs to the sterol desaturase family. SCS7 subfamily. Requires Zn(2+) as cofactor. In terms of tissue distribution, detected in differentiating cultured keratinocytes (at protein level). Detected in epidermis and cultured keratinocytes. Highly expressed in brain and colon. Detected at lower levels in testis, prostate, pancreas and kidney.

It localises to the endoplasmic reticulum membrane. Its subcellular location is the microsome membrane. The catalysed reaction is a 1,2-saturated fatty acid + 2 Fe(II)-[cytochrome b5] + O2 + 2 H(+) = a (R)-2-hydroxy fatty acid + 2 Fe(III)-[cytochrome b5] + H2O. It carries out the reaction hexadecanoate + 2 Fe(II)-[cytochrome b5] + O2 + 2 H(+) = (R)-2-hydroxyhexadecanoate + 2 Fe(III)-[cytochrome b5] + H2O. It catalyses the reaction octadecanoate + 2 Fe(II)-[cytochrome b5] + O2 + 2 H(+) = (R)-2-hydroxyoctadecanoate + 2 Fe(III)-[cytochrome b5] + H2O. The enzyme catalyses docosanoate + 2 Fe(II)-[cytochrome b5] + O2 + 2 H(+) = 2-hydroxydocosanoate + 2 Fe(III)-[cytochrome b5] + H2O. The catalysed reaction is tetracosanoate + 2 Fe(II)-[cytochrome b5] + O2 + 2 H(+) = (R)-2-hydroxytetracosanoate + 2 Fe(III)-[cytochrome b5] + H2O. It functions in the pathway lipid metabolism; fatty acid metabolism. The protein operates within sphingolipid metabolism; galactosylceramide biosynthesis. Catalyzes the hydroxylation of free fatty acids at the C-2 position to produce 2-hydroxy fatty acids, which are building blocks of sphingolipids and glycosphingolipids common in neural tissue and epidermis. FA2H is stereospecific for the production of (R)-2-hydroxy fatty acids. Plays an essential role in the synthesis of galactosphingolipids of the myelin sheath. Responsible for the synthesis of sphingolipids and glycosphingolipids involved in the formation of epidermal lamellar bodies critical for skin permeability barrier. Participates in the synthesis of glycosphingolipids and a fraction of type II wax diesters in sebaceous gland, specifically regulating hair follicle homeostasis. Involved in the synthesis of sphingolipids of plasma membrane rafts, controlling lipid raft mobility and trafficking of raft-associated proteins. In Homo sapiens (Human), this protein is Fatty acid 2-hydroxylase.